We begin with the raw amino-acid sequence, 137 residues long: Nucleoside diphosphate kinase (137 aa).

6 residues coordinate ATP: lysine 10, phenylalanine 59, arginine 87, threonine 93, arginine 104, and asparagine 114. The Pros-phosphohistidine intermediate role is filled by histidine 117.

The protein belongs to the NDK family. As to quaternary structure, homotetramer. Mg(2+) serves as cofactor.

It localises to the cytoplasm. The enzyme catalyses a 2'-deoxyribonucleoside 5'-diphosphate + ATP = a 2'-deoxyribonucleoside 5'-triphosphate + ADP. It carries out the reaction a ribonucleoside 5'-diphosphate + ATP = a ribonucleoside 5'-triphosphate + ADP. In terms of biological role, major role in the synthesis of nucleoside triphosphates other than ATP. The ATP gamma phosphate is transferred to the NDP beta phosphate via a ping-pong mechanism, using a phosphorylated active-site intermediate. This is Nucleoside diphosphate kinase from Streptomyces griseus subsp. griseus (strain JCM 4626 / CBS 651.72 / NBRC 13350 / KCC S-0626 / ISP 5235).